Consider the following 264-residue polypeptide: Forkhead box protein pes-1 (264 aa).

2 disordered regions span residues 15–36 and 50–93; these read DLDN…GNSK and DSST…PTKR. The span at 50–64 shows a compositional bias: low complexity; the sequence is DSSTSSSCSVSPASS. The span at 70–89 shows a compositional bias: polar residues; sequence ESVGQQQSGRNSPVSSSTES. Positions 93 to 186 form a DNA-binding region, fork-head; the sequence is RPKYSYNALI…ISNNCGKLRR (94 aa).

It localises to the nucleus. The protein resides in the cytoplasm. Transcription factor. Plays a role in embryogenesis and later development, perhaps acting redundantly with forkhead protein fkh-2. The polypeptide is Forkhead box protein pes-1 (Caenorhabditis elegans).